Consider the following 254-residue polypeptide: Pyridoxine 5'-phosphate synthase (254 aa).

Residue N8 participates in 3-amino-2-oxopropyl phosphate binding. 10 to 11 (DH) contributes to the 1-deoxy-D-xylulose 5-phosphate binding site. R19 provides a ligand contact to 3-amino-2-oxopropyl phosphate. Residue H44 is the Proton acceptor of the active site. Positions 46 and 51 each coordinate 1-deoxy-D-xylulose 5-phosphate. The active-site Proton acceptor is the E74. T104 serves as a coordination point for 1-deoxy-D-xylulose 5-phosphate. The active-site Proton donor is H198. 3-amino-2-oxopropyl phosphate contacts are provided by residues G199 and 220–221 (GH).

It belongs to the PNP synthase family. As to quaternary structure, homooctamer; tetramer of dimers.

Its subcellular location is the cytoplasm. It carries out the reaction 3-amino-2-oxopropyl phosphate + 1-deoxy-D-xylulose 5-phosphate = pyridoxine 5'-phosphate + phosphate + 2 H2O + H(+). Its pathway is cofactor biosynthesis; pyridoxine 5'-phosphate biosynthesis; pyridoxine 5'-phosphate from D-erythrose 4-phosphate: step 5/5. In terms of biological role, catalyzes the complicated ring closure reaction between the two acyclic compounds 1-deoxy-D-xylulose-5-phosphate (DXP) and 3-amino-2-oxopropyl phosphate (1-amino-acetone-3-phosphate or AAP) to form pyridoxine 5'-phosphate (PNP) and inorganic phosphate. The protein is Pyridoxine 5'-phosphate synthase of Caulobacter vibrioides (strain ATCC 19089 / CIP 103742 / CB 15) (Caulobacter crescentus).